Consider the following 819-residue polypeptide: Transferrin 2 (819 aa).

Positions Met-1–Ala-21 are cleaved as a signal peptide. The Transferrin-like 1 domain occupies Met-33 to Leu-373. Disulfide bonds link Cys-36/Cys-78 and Cys-46/Cys-69. 2 N-linked (GlcNAc...) asparagine glycosylation sites follow: Asn-48 and Asn-66. Residues Asp-93 and Tyr-121 each coordinate Fe(3+). Intrachain disulfides connect Cys-147-Cys-237, Cys-190-Cys-213, and Cys-273-Cys-287. The hydrogencarbonate site is built by Ala-155 and Gly-156. N-linked (GlcNAc...) asparagine glycosylation is present at Asn-187. Tyr-231 serves as a coordination point for Fe(3+). Residues Gly-325–Thr-361 form a disordered region. The span at Arg-332–Thr-361 shows a compositional bias: polar residues. Asn-388 carries N-linked (GlcNAc...) asparagine glycosylation. The Transferrin-like 2 domain occupies Met-450–Cys-796. Cystine bridges form between Cys-453-Cys-490 and Cys-463-Cys-481. Fe(3+) contacts are provided by Asp-505 and Tyr-533. Intrachain disulfides connect Cys-557/Cys-646, Cys-599/Cys-621, Cys-618/Cys-629, and Cys-687/Cys-701. Hydrogencarbonate-binding residues include Thr-559, Ala-565, and Gly-566. N-linked (GlcNAc...) asparagine glycosylation occurs at Asn-720. A lipid anchor (GPI-anchor amidated cysteine) is attached at Cys-796. A propeptide spans Tyr-797 to Leu-819 (removed in mature form).

The protein belongs to the transferrin family. Forms a complex composed of septa junction proteins Nrx-IV/Nrx, Tsf2/MTf, Cont and Nrg during late embryogenesis.

The protein localises to the apicolateral cell membrane. The protein resides in the cell junction. It is found in the septate junction. Functionally, iron-binding protein and component of septate junctions that form the paracellular permeability barrier in epithelial tissues. In an iron-dependent manner, required for septate junction assembly during epithelial maturation in embryos and mature septa junctions stability. The protein is Transferrin 2 of Drosophila melanogaster (Fruit fly).